Here is a 406-residue protein sequence, read N- to C-terminus: N-acetylmuramoyl-L-alanine amidase CwlM (406 aa).

Peptidoglycan-binding domain regions lie at residues 18–83 (SAAV…YRAL) and 105–160 (GDDV…LRSL). Residues 193-370 (IIIDPGRGGV…IAEGILAAVK (178 aa)) enclose the MurNAc-LAA domain.

It belongs to the N-acetylmuramoyl-L-alanine amidase 3 family.

It localises to the periplasm. It catalyses the reaction Hydrolyzes the link between N-acetylmuramoyl residues and L-amino acid residues in certain cell-wall glycopeptides.. It functions in the pathway cell wall degradation; peptidoglycan degradation. Functionally, cell-wall hydrolase that hydrolyzes the amide bond between N-acetylmuramic acid and L-alanine in cell-wall glycopeptides. Is able to lyse whole mycobacteria, release peptidoglycan from the cell wall of M.luteus and M.smegmatis, and cleave N-acetylmuramoyl-L-alanyl-D-isoglutamine, releasing free N-acetylmuramic acid and dipeptide. The sequence is that of N-acetylmuramoyl-L-alanine amidase CwlM from Mycobacterium tuberculosis (strain ATCC 25618 / H37Rv).